Reading from the N-terminus, the 249-residue chain is tRNA pseudouridine synthase A (249 aa).

The active-site Nucleophile is Asp52. Tyr110 serves as a coordination point for substrate.

It belongs to the tRNA pseudouridine synthase TruA family. As to quaternary structure, homodimer.

It catalyses the reaction uridine(38/39/40) in tRNA = pseudouridine(38/39/40) in tRNA. In terms of biological role, formation of pseudouridine at positions 38, 39 and 40 in the anticodon stem and loop of transfer RNAs. The protein is tRNA pseudouridine synthase A of Azobacteroides pseudotrichonymphae genomovar. CFP2.